Consider the following 254-residue polypeptide: Alcohol dehydrogenase 1 (254 aa).

10–33 (FVAGLGGIGLDTSREIVKSGPKNL) lines the NAD(+) pocket. A substrate-binding site is contributed by serine 138. Tyrosine 151 (proton acceptor) is an active-site residue.

This sequence belongs to the short-chain dehydrogenases/reductases (SDR) family. Homodimer.

It catalyses the reaction a primary alcohol + NAD(+) = an aldehyde + NADH + H(+). The enzyme catalyses a secondary alcohol + NAD(+) = a ketone + NADH + H(+). The polypeptide is Alcohol dehydrogenase 1 (Adh1) (Drosophila hydei (Fruit fly)).